The following is a 1221-amino-acid chain: Reverse gyrase subunit B (1221 aa).

The RG N-terminal-type zinc-finger motif lies at 56 to 97 (NEPVAIFGSSCVLCGGDCSSVRLTSRIGICERCLPVDTETLR). Residues Cys-66, Cys-69, Cys-85, and Cys-88 each coordinate Zn(2+). ATP-binding positions include Gln-161 and 178-185 (APTGTGKT). Residues 165-400 (TRRLVKGCSF…AVVRELFDFE (236 aa)) enclose the Helicase ATP-binding domain. The short motif at 284–287 (DDVD) is the DEAD box element. In terms of domain architecture, Helicase C-terminal spans 424–600 (AVERIVRKAG…PLSLNTLMKL (177 aa)). One can recognise a Toprim domain in the interval 779–935 (SALMIVESPN…QVYRTEFHEV (157 aa)). Glu-785 contributes to the Mg(2+) binding site. An RG C-terminal-type zinc finger spans residues 856–882 (LGRCSECGEQVVGSEECPNCGGEVELK). Zn(2+) is bound by residues Cys-859, Cys-862, Cys-872, and Cys-875. Residue Asp-904 participates in Mg(2+) binding. In terms of domain architecture, Topo IA-type catalytic spans 953 to 1221 (DAGRVSAQIL…MLHLAGVSGR (269 aa)).

The protein in the C-terminal section; belongs to the type IA topoisomerase family. It in the N-terminal section; belongs to the DEAD box helicase family. DDVD subfamily. As to quaternary structure, heterodimer of an RgyrA and RgyrB subunit. The topoisomerase domain is shared between the two subunits. It depends on Zn(2+) as a cofactor. Mg(2+) is required as a cofactor. The N-terminus is partially blocked.

The protein localises to the cytoplasm. The enzyme catalyses ATP + H2O = ADP + phosphate + H(+). Its function is as follows. Modifies the topological state of DNA by introducing positive supercoils in an ATP-dependent process; dATP also allows positive supercoiling. Increases the linking number in steps of +1. Only this subunit binds ATP, it does so in a DNA- and RgyA-independent manner. Hydrolyzes ATP only in the presence of DNA. The RgyA subunit transiently cleaves a single DNA strand and remains covalently bound to the 5' DNA end probably through a tyrosine residue. It changes linking number in steps of one, and nicks DNA preferentially at 5'-CNNN | 3'-sites with a strong preference for 4 pyrimidine residues. There are about 1000 heterodimers per cell. May be involved in rewinding the DNA strands in the regions of the chromosome that have opened up to allow transcription or replication. Functionally, this subunit expressed in E.coli only has DNA-dependent ATPase activity at 80 degrees Celsius. Reverse gyrase activity is reconstituted after incubation at 80 degrees Celsius for 5 minutes, positive supercoiling requires ATP and Mg(2+). In the presence of ATP it binds and nicks substrate but does not make closed product. The sequence is that of Reverse gyrase subunit B from Methanopyrus kandleri (strain AV19 / DSM 6324 / JCM 9639 / NBRC 100938).